Consider the following 423-residue polypeptide: Putative gustatory receptor 97a (423 aa).

Residues 1-31 (MRFLRRQTRRLRSIWQRSLPVRFRRGKLHTQ) are Cytoplasmic-facing. The chain crosses the membrane as a helical span at residues 32 to 52 (LVTICLYATVFLNILYGVYLG). Topologically, residues 53-65 (RFSFRRKKFVFSK) are extracellular. A helical membrane pass occupies residues 66–86 (GLTIYSLFVATFFALFYIWNI). Over 87–99 (YNEISTGQINLRD) the chain is Cytoplasmic. Residues 100–120 (TIGIYCYMNVCVCLFNYVTQW) traverse the membrane as a helical segment. Residues 121 to 152 (EKTLQIIRFQNSVPLFKVLDSLDISAMIVWRA) are Extracellular-facing. The helical transmembrane segment at 153-173 (FIYGLLKIVFCPLITYITLIL) threads the bilayer. Topologically, residues 174 to 200 (YHRRSISESQWTSVTTTKTMLPLIVSN) are cytoplasmic. The helical transmembrane segment at 201-221 (QINNCFFGGLVLANLIFAAVN) threads the bilayer. Residues 222 to 278 (RKLHGIVKEANMLQSPVQMNLHKPYYRMRRFCELADLLDELARKYGFTASRSKNYLR) lie on the Extracellular side of the membrane. The chain crosses the membrane as a helical span at residues 279–299 (FTDWSMVLSMLMNLLGITMGC). At 300–317 (YNQYLAIADHYINEEPFD) the chain is on the cytoplasmic side. The chain crosses the membrane as a helical span at residues 318 to 338 (LFLAIVLVVFLAVPFLELVMV). The Extracellular segment spans residues 339-423 (ARISNQTLTR…SDLTLRFSLK (85 aa)). Residues Asn343 and Asn393 are each glycosylated (N-linked (GlcNAc...) asparagine).

The protein belongs to the insect chemoreceptor superfamily. Gustatory receptor (GR) family. Gr22e subfamily. In terms of tissue distribution, in larvae, is expressed in neurons of the terminal external chemosensory organ.

The protein resides in the cell membrane. Functionally, probable gustatory receptor which mediates acceptance or avoidance behavior, depending on its substrates. This chain is Putative gustatory receptor 97a (Gr97a), found in Drosophila melanogaster (Fruit fly).